The sequence spans 218 residues: Thiamine-phosphate synthase (218 aa).

Residues 43–47 (QLRDK) and asparagine 75 each bind 4-amino-2-methyl-5-(diphosphooxymethyl)pyrimidine. The Mg(2+) site is built by aspartate 76 and aspartate 95. Serine 114 provides a ligand contact to 4-amino-2-methyl-5-(diphosphooxymethyl)pyrimidine. 141 to 143 (TPT) is a 2-[(2R,5Z)-2-carboxy-4-methylthiazol-5(2H)-ylidene]ethyl phosphate binding site. A 4-amino-2-methyl-5-(diphosphooxymethyl)pyrimidine-binding site is contributed by lysine 144. Residue glycine 172 participates in 2-[(2R,5Z)-2-carboxy-4-methylthiazol-5(2H)-ylidene]ethyl phosphate binding.

It belongs to the thiamine-phosphate synthase family. Mg(2+) is required as a cofactor.

The enzyme catalyses 2-[(2R,5Z)-2-carboxy-4-methylthiazol-5(2H)-ylidene]ethyl phosphate + 4-amino-2-methyl-5-(diphosphooxymethyl)pyrimidine + 2 H(+) = thiamine phosphate + CO2 + diphosphate. The catalysed reaction is 2-(2-carboxy-4-methylthiazol-5-yl)ethyl phosphate + 4-amino-2-methyl-5-(diphosphooxymethyl)pyrimidine + 2 H(+) = thiamine phosphate + CO2 + diphosphate. It carries out the reaction 4-methyl-5-(2-phosphooxyethyl)-thiazole + 4-amino-2-methyl-5-(diphosphooxymethyl)pyrimidine + H(+) = thiamine phosphate + diphosphate. It functions in the pathway cofactor biosynthesis; thiamine diphosphate biosynthesis; thiamine phosphate from 4-amino-2-methyl-5-diphosphomethylpyrimidine and 4-methyl-5-(2-phosphoethyl)-thiazole: step 1/1. Functionally, condenses 4-methyl-5-(beta-hydroxyethyl)thiazole monophosphate (THZ-P) and 2-methyl-4-amino-5-hydroxymethyl pyrimidine pyrophosphate (HMP-PP) to form thiamine monophosphate (TMP). The protein is Thiamine-phosphate synthase of Thermobifida fusca (strain YX).